The sequence spans 200 residues: Translation machinery-associated protein 22 (200 aa).

The 72-residue stretch at 106–177 (VQIKRVERNK…DVLEWLVEVH (72 aa)) folds into the SUI1 domain.

Belongs to the DENR family. In terms of assembly, interacts with the 40S ribosomal subunit.

The protein localises to the cytoplasm. This chain is Translation machinery-associated protein 22 (TMA22), found in Coccidioides immitis (strain RS) (Valley fever fungus).